Reading from the N-terminus, the 663-residue chain is 72 kDa type IV collagenase (663 aa).

A signal peptide spans 1–26 (MKTHSVFGFFFKVLLIQVYLFNKTLA). The propeptide at 27–106 (APSPIIKFPG…PRCGNPDVAN (80 aa)) is activation peptide. Residues 97-104 (PRCGNPDV) carry the Cysteine switch motif. Cys-99 contacts Zn(2+). Residues 107-218 (YNFFPRKPKW…LWTLGEGQVV (112 aa)) are collagenase-like 1. Residues Asp-131 and Asp-165 each coordinate Ca(2+). Zn(2+) is bound by residues His-175 and Asp-177. Residues Asp-182 and Gly-183 each coordinate Ca(2+). A Zn(2+)-binding site is contributed by His-190. Ca(2+) is bound by residues Gly-197, Gly-199, and Asp-201. Zn(2+) is bound at residue His-203. Residues Asp-205, Asp-206, and Glu-208 each coordinate Ca(2+). The collagen-binding stretch occupies residues 219 to 393 (RVKYGNADGE…WGFCPDQGYS (175 aa)). Fibronectin type-II domains lie at 225 to 273 (ADGE…FCPH), 283 to 331 (GDGQ…FCPE), and 341 to 389 (SEGA…FCPD). Intrachain disulfides connect Cys-230–Cys-256, Cys-244–Cys-271, Cys-288–Cys-314, Cys-302–Cys-329, Cys-346–Cys-372, and Cys-360–Cys-387. The collagenase-like 2 stretch occupies residues 394 to 468 (LFLVAAHEFG…GPRPTLGPVT (75 aa)). His-400 contacts Zn(2+). Residue Glu-401 is part of the active site. 2 residues coordinate Zn(2+): His-404 and His-410. Residues 445–464 (SPDVEPGPGPGPGPGPRPTL) form a disordered region. Positions 449-463 (EPGPGPGPGPGPRPT) are enriched in pro residues. The cysteines at positions 472 and 663 are disulfide-linked. Hemopexin repeat units lie at residues 475–519 (DIVF…WPDL), 520–566 (PEKI…GLPP), 568–616 (VQRI…WNGV), and 617–663 (PDNL…WLGC). Asp-479, Asp-524, Asp-572, and Asp-621 together coordinate Ca(2+).

This sequence belongs to the peptidase M10A family. As to quaternary structure, ligand for integrin alpha-V/beta-3. Ca(2+) is required as a cofactor. It depends on Zn(2+) as a cofactor. Post-translationally, the propeptide is processed by MMP14 (MT-MMP1) and MMP16 (MT-MMP3). In terms of tissue distribution, produced by normal skin fibroblasts.

Its subcellular location is the secreted. It localises to the extracellular space. The protein resides in the extracellular matrix. The catalysed reaction is Cleavage of gelatin type I and collagen types IV, V, VII, X. Cleaves the collagen-like sequence Pro-Gln-Gly-|-Ile-Ala-Gly-Gln.. This Gallus gallus (Chicken) protein is 72 kDa type IV collagenase (MMP2).